Reading from the N-terminus, the 80-residue chain is Putative membrane protein insertion efficiency factor (80 aa).

Belongs to the UPF0161 family.

It is found in the cell membrane. Functionally, could be involved in insertion of integral membrane proteins into the membrane. This Shouchella clausii (strain KSM-K16) (Alkalihalobacillus clausii) protein is Putative membrane protein insertion efficiency factor.